We begin with the raw amino-acid sequence, 1215 residues long: MNSNRKNENEIINALSIPAVSNHSAQMDLSPDARIEDSLCVAEGNNIDPFVSASTVQTGISIAGRILGVLGVPFAGQLASFYSFLVGELWPSGRDPWEIFMEHVEQIVRQQQITDSVRDTAIARLEGLGRGYRSYQQALETWLDNRNDARSRSIIRERYIALELDITTAIPLFSIRNEEVPLLMVYAQAANLHLLLLRDASLFGSEWGMSSADVNQYYQEQIRYTEEYSNHCVQWYNTGLNRLRGTTAETWVRYNQFRRDLTLGVLDLVALFPSYDTRTYPIPTTAQLTREVYTDPNGVVAGPNNSWFRNGASFSAIENAIIRQPHLYDFLTNLTIYTRRSQVGTTIMNLWAGHRITFNRIQGGSTSEMVYGAITNPVSVSDIPFVNRDVYRTVSLAGGLGSLSGIRYGLTRVDFDMIFRNHPDIVTGLFYHPGHAGIATQVKDSDTELPPETTEQPNYRAFSHLLSHISMGPTTQDVPPVYSWTHQSADRTNTINSDRITQIPLVKAHTLQSGTTVVKGPGFTGGDILRRTSGGPFAFSNVNLDFNLSQRYRARIRYASTTNLRIYVTVAGERIFAGQFDKTMDAGAPLTFQSFSYATINTAFTFPERSSSLTIGADTFSSGNEVYVDRFELIQVTATFEAESDLERARKAVNALFTSTNPRGLKTDVTDYHIDQVSNLVECLSDEFCLDKKRELLEEVKYAKRLSDERNLLQDPTFTSISGQTDRGWIGSTGISIQGGDDIFKENYVRLPGTVDECYPTYLYQKIDESQLKSYTRYQLRGYIEDSQDLEIYLIRYNAKHETLSVPGTESPWPSSGVYPSGRCGEPNRCAPRIEWNPDLDCSCRYGEKCVHHSHHFSLDIDVGCTDLNEDLGVWVIFKIKTQDGHAKLGNLEFIEEKPLLGKALSRVKRAEKKWRDKYEKLQLETKRVYTEAKESVDALFVDSQYDKLQANTNIGIIHGADKQVHRIREPYLSELPVIPSINAAIFEELEGHIFKAYSLYDARNVIKNGDFNNGLSCWNVKGHVDVQQNHHRSVLVLSEWEAEVSQKVRVCPDRGYILRVTAYKEGYGEGCVTIHEFEDNTDVLKFRNFVEEEVYPNNTVTCNDYTTNQSAEGSTDACNSYNRGYEDGYENRYEPNPSAPVNYTPTYEEGMYTDTQGYNHCVSDRGYRNHTPLPAGYVTLELEYFPETEQVWIEIGETEGTFIVGSVELLLMEE.

The protein belongs to the delta endotoxin family.

In terms of biological role, promotes colloidosmotic lysis by binding to the midgut epithelial cells of insects. Selectively toxic to Artogeia rapae but not active on Plutella xylostella. The sequence is that of Pesticidal crystal protein Cry1Ka (cry1Ka) from Bacillus thuringiensis subsp. morrisoni.